Consider the following 458-residue polypeptide: tRNA modification GTPase MnmE (458 aa).

The (6S)-5-formyl-5,6,7,8-tetrahydrofolate site is built by R26, E88, and R127. Residues 224 to 378 (GLSTAIIGRP…IEERINDIFF (155 aa)) form the TrmE-type G domain. N234 serves as a coordination point for K(+). GTP is bound by residues 234-239 (NVGKSS), 253-259 (TDIEGTT), and 278-281 (DTAG). A Mg(2+)-binding site is contributed by S238. 3 residues coordinate K(+): T253, I255, and T258. T259 provides a ligand contact to Mg(2+). Residue K458 coordinates (6S)-5-formyl-5,6,7,8-tetrahydrofolate.

This sequence belongs to the TRAFAC class TrmE-Era-EngA-EngB-Septin-like GTPase superfamily. TrmE GTPase family. Homodimer. Heterotetramer of two MnmE and two MnmG subunits. The cofactor is K(+).

It is found in the cytoplasm. In terms of biological role, exhibits a very high intrinsic GTPase hydrolysis rate. Involved in the addition of a carboxymethylaminomethyl (cmnm) group at the wobble position (U34) of certain tRNAs, forming tRNA-cmnm(5)s(2)U34. This Streptococcus agalactiae serotype Ia (strain ATCC 27591 / A909 / CDC SS700) protein is tRNA modification GTPase MnmE.